A 278-amino-acid chain; its full sequence is Neuronal membrane glycoprotein M6-a (278 aa).

M1 is subject to N-acetylmethionine. Residues 1-22 (MEENMEEGQTQKGCFECCIKCL) lie on the Cytoplasmic side of the membrane. The helical transmembrane segment at 23 to 43 (GGIPYASLIATILLYAGVALF) threads the bilayer. The Extracellular segment spans residues 44 to 84 (CGCGHEALSGTVNILQTYFELARTAGDTLDVFTMIDIFKYV). Residues 85-105 (IYGIAAAFFVYGILLMVEGFF) form a helical membrane-spanning segment. Residues 106–127 (TTGAIKDLYGDFKITTCGRCVS) are Cytoplasmic-facing. A helical transmembrane segment spans residues 128–148 (AWFIMLTYLFMLAWLGVTAFT). Over 149–213 (SLPVYMYFNV…STELNMTFHL (65 aa)) the chain is Extracellular. N-linked (GlcNAc...) asparagine glycosylation occurs at N164. C174 and C192 are oxidised to a cystine. A glycan (N-linked (GlcNAc...) asparagine) is linked at N208. The chain crosses the membrane as a helical span at residues 214–234 (FIVALAGAGAAVIAMVHYLMV). Residues 235–278 (LSANWAYVKDACRMQKYEDIKSKEEQELHDIHSTRSKERLNAYT) are Cytoplasmic-facing. Residue S256 is modified to Phosphoserine. Phosphothreonine is present on T278.

Belongs to the myelin proteolipid protein family. Interacts with OPRM1. Interacts with palmitoyltransferase ZDHHC17/HIP14; the interaction leads to palmitoylation of GPM6A. Post-translationally, N-glycosylated. In terms of processing, palmitoylated by ZDHHC17/HIP14. Widely expressed in the CNS. Found especially in the granule cell layer of the cerebellum but not in the molecular layer or white matter. Expressed in the immature embryonic retina including the nerve fiber layer (NFL), inner plexiform layer (IPL), and outer plexiform layer (OPL). Weakly expressed in processes of Mueller glia cells.

It is found in the cell membrane. Its subcellular location is the cell projection. The protein localises to the axon. The protein resides in the growth cone. It localises to the dendritic spine. It is found in the filopodium. Its subcellular location is the neuron projection. Functionally, involved in neuronal differentiation, including differentiation and migration of neuronal stem cells. Plays a role in neuronal plasticity and is involved in neurite and filopodia outgrowth, filopodia motility and probably synapse formation. Gpm6a-induced filopodia formation involves mitogen-activated protein kinase (MAPK) and Src signaling pathways. Conflictingly, PubMed:22162747 reports that induced cellular protrusions are simple membrane-wrapped tubules without actin or tubulin-based cytoskeletons and with Gpm6a gliding along membrane edges indicative for a function in actin-independent membrane deformation. May be involved in neuronal NGF-dependent Ca(2+) influx. May be involved in regulation of endocytosis and intracellular trafficking of G-protein-coupled receptors (GPCRs); enhances internalization and recycling of mu-type opioid receptor. In Mus musculus (Mouse), this protein is Neuronal membrane glycoprotein M6-a (Gpm6a).